We begin with the raw amino-acid sequence, 504 residues long: Cholesterol 7-alpha-monooxygenase (504 aa).

A heme-binding site is contributed by cysteine 444.

It belongs to the cytochrome P450 family. Requires heme as cofactor.

It localises to the endoplasmic reticulum membrane. Its subcellular location is the microsome membrane. It catalyses the reaction cholesterol + reduced [NADPH--hemoprotein reductase] + O2 = 7alpha-hydroxycholesterol + oxidized [NADPH--hemoprotein reductase] + H2O + H(+). The protein operates within lipid metabolism; bile acid biosynthesis. Functionally, catalyzes a rate-limiting step in cholesterol catabolism and bile acid biosynthesis by introducing a hydrophilic moiety at position 7 of cholesterol. Important for cholesterol homeostasis. This chain is Cholesterol 7-alpha-monooxygenase (CYP7A1), found in Cricetulus griseus (Chinese hamster).